Consider the following 287-residue polypeptide: Ferredoxin-type protein NapH (287 aa).

The Cytoplasmic segment spans residues Met1–Arg29. Residues Leu30 to Leu50 traverse the membrane as a helical segment. The Periplasmic segment spans residues His51–His79. Residues Leu80–Gly100 form a helical membrane-spanning segment. Over Lys101–Tyr139 the chain is Cytoplasmic. A helical membrane pass occupies residues Val140 to Ile160. Residues Asn161–Leu170 are Periplasmic-facing. The helical transmembrane segment at Val171 to Val191 threads the bilayer. Residues Val192–Ser287 lie on the Cytoplasmic side of the membrane. 4Fe-4S ferredoxin-type domains are found at residues Thr217 to Leu247 and Ser251 to Arg280. The [4Fe-4S] cluster site is built by Cys226, Cys229, Cys232, Cys236, Cys260, Cys263, Cys266, and Cys270.

As to quaternary structure, interacts with NapC. Requires [4Fe-4S] cluster as cofactor.

The protein resides in the cell inner membrane. In terms of biological role, required for electron transfer from ubiquinol, via NapC, to the periplasmic nitrate reductase NapAB complex. The chain is Ferredoxin-type protein NapH (napH) from Escherichia coli (strain K12).